The primary structure comprises 157 residues: MRIGIGIDIHQLVEGRKLIIGGVEIPYEKGLKGHSDADVLLHAISDALLGAAALGDIGKHFPDTDPAYKGIDSQLLLKHVRKLLETHGYKPVNVDSMLLLEKPKIAPHVQKMRENIAACLEVDVDAISVKATTNEKIGYVGRGEGALAHAVCLIEKI.

2 residues coordinate a divalent metal cation: Asp-8 and His-10. Residues 8–10 and 34–35 contribute to the 4-CDP-2-C-methyl-D-erythritol 2-phosphate site; these read DIH and HS. An a divalent metal cation-binding site is contributed by His-42. 4-CDP-2-C-methyl-D-erythritol 2-phosphate-binding positions include 56-58, 61-65, 132-135, and Arg-142; these read DIG, FPDTD, and TTNE.

This sequence belongs to the IspF family. Homotrimer. It depends on a divalent metal cation as a cofactor.

It carries out the reaction 4-CDP-2-C-methyl-D-erythritol 2-phosphate = 2-C-methyl-D-erythritol 2,4-cyclic diphosphate + CMP. The protein operates within isoprenoid biosynthesis; isopentenyl diphosphate biosynthesis via DXP pathway; isopentenyl diphosphate from 1-deoxy-D-xylulose 5-phosphate: step 4/6. Functionally, involved in the biosynthesis of isopentenyl diphosphate (IPP) and dimethylallyl diphosphate (DMAPP), two major building blocks of isoprenoid compounds. Catalyzes the conversion of 4-diphosphocytidyl-2-C-methyl-D-erythritol 2-phosphate (CDP-ME2P) to 2-C-methyl-D-erythritol 2,4-cyclodiphosphate (ME-CPP) with a corresponding release of cytidine 5-monophosphate (CMP). The chain is 2-C-methyl-D-erythritol 2,4-cyclodiphosphate synthase from Chloroherpeton thalassium (strain ATCC 35110 / GB-78).